The chain runs to 323 residues: Olfactory receptor 2T35 (323 aa).

Over 1-26 (MGMEGLLQNSTNFVLTGLITHPAFPG) the chain is Extracellular. The N-linked (GlcNAc...) asparagine glycan is linked to N9. A helical transmembrane segment spans residues 27 to 50 (LLFAVVFSIFVVAITANLVMILLI). Topologically, residues 51-58 (HMDSRLHT) are cytoplasmic. Residues 59–80 (PMYFLLSQLSIMDTIYICITVP) form a helical membrane-spanning segment. Residues 81–101 (KMLQDLLSKDKTISFLGCAVQ) lie on the Extracellular side of the membrane. A disulfide bond links C98 and C189. Residues 102–120 (IFYLTLIGGEFFLLGLMAY) traverse the membrane as a helical segment. Over 121 to 139 (DRYVAVCNPLRYPLLMNRR) the chain is Cytoplasmic. The helical transmembrane segment at 140–158 (VCLFMVVGSWVGGSLDGFM) threads the bilayer. The Extracellular portion of the chain corresponds to 159 to 195 (LTPVTMSFPFCRSREINHFFCEIPAVLKLSCTDTSLY). The chain crosses the membrane as a helical span at residues 196–219 (ETLMYACCVLMLLIPLSVISVSYT). Residues 220-236 (HILLTVHRMNSAEGRRK) lie on the Cytoplasmic side of the membrane. The chain crosses the membrane as a helical span at residues 237–259 (AFATCSSHIMVVSVFYGAAFYTN). Residues 260–272 (VLPHSYHTPEKDK) lie on the Extracellular side of the membrane. The helical transmembrane segment at 273–292 (VVSAFYTILTPMLNPLIYSL) threads the bilayer. Topologically, residues 293–323 (RNKDVAAALRKVLGRCGSSQSIRVATVIRKG) are cytoplasmic.

Belongs to the G-protein coupled receptor 1 family.

It is found in the cell membrane. Odorant receptor. This is Olfactory receptor 2T35 (OR2T35) from Homo sapiens (Human).